We begin with the raw amino-acid sequence, 502 residues long: Lanosterol 14-alpha demethylase (502 aa).

Residues 22–42 form a helical membrane-spanning segment; it reads GNLASMLLIACAFTLSLVYLF. Cysteine 448 provides a ligand contact to heme.

The protein belongs to the cytochrome P450 family. It depends on heme as a cofactor. Ubiquitinated by MARCHF6, leading to proteasomal degradation.

The protein localises to the endoplasmic reticulum membrane. It is found in the microsome membrane. The enzyme catalyses a 14alpha-methyl steroid + 3 reduced [NADPH--hemoprotein reductase] + 3 O2 = a Delta(14) steroid + formate + 3 oxidized [NADPH--hemoprotein reductase] + 4 H2O + 4 H(+). The catalysed reaction is lanosterol + 3 reduced [NADPH--hemoprotein reductase] + 3 O2 = 4,4-dimethyl-5alpha-cholesta-8,14,24-trien-3beta-ol + formate + 3 oxidized [NADPH--hemoprotein reductase] + 4 H2O + 4 H(+). It catalyses the reaction 24,25-dihydrolanosterol + 3 reduced [NADPH--hemoprotein reductase] + 3 O2 = 4,4-dimethyl-8,14-cholestadien-3beta-ol + formate + 3 oxidized [NADPH--hemoprotein reductase] + 4 H2O + 4 H(+). It carries out the reaction a 14alpha-methyl steroid + reduced [NADPH--hemoprotein reductase] + O2 = a 14alpha-hydroxymethyl steroid + oxidized [NADPH--hemoprotein reductase] + H2O + H(+). The enzyme catalyses a 14alpha-hydroxymethyl steroid + reduced [NADPH--hemoprotein reductase] + O2 = a 14alpha-formyl steroid + oxidized [NADPH--hemoprotein reductase] + 2 H2O + H(+). The catalysed reaction is a 14alpha-formyl steroid + reduced [NADPH--hemoprotein reductase] + O2 = a Delta(14) steroid + formate + oxidized [NADPH--hemoprotein reductase] + H2O + 2 H(+). It catalyses the reaction lanosterol + reduced [NADPH--hemoprotein reductase] + O2 = 32-hydroxylanosterol + oxidized [NADPH--hemoprotein reductase] + H2O + H(+). It carries out the reaction 32-hydroxylanosterol + reduced [NADPH--hemoprotein reductase] + O2 = 32-oxolanosterol + oxidized [NADPH--hemoprotein reductase] + 2 H2O + H(+). The enzyme catalyses 32-oxolanosterol + reduced [NADPH--hemoprotein reductase] + O2 = 4,4-dimethyl-5alpha-cholesta-8,14,24-trien-3beta-ol + formate + oxidized [NADPH--hemoprotein reductase] + H2O + 2 H(+). The catalysed reaction is 24,25-dihydrolanosterol + reduced [NADPH--hemoprotein reductase] + O2 = 32-hydroxy-24,25-dihydrolanosterol + oxidized [NADPH--hemoprotein reductase] + H2O + H(+). It catalyses the reaction 32-hydroxy-24,25-dihydrolanosterol + reduced [NADPH--hemoprotein reductase] + O2 = 32-oxo-24,25-dihydrolanosterol + oxidized [NADPH--hemoprotein reductase] + 2 H2O + H(+). It carries out the reaction 32-oxo-24,25-dihydrolanosterol + reduced [NADPH--hemoprotein reductase] + O2 = 4,4-dimethyl-8,14-cholestadien-3beta-ol + formate + oxidized [NADPH--hemoprotein reductase] + H2O + 2 H(+). It participates in steroid biosynthesis; zymosterol biosynthesis; zymosterol from lanosterol: step 1/6. With respect to regulation, inhibited by azalanstat. Inhibited by azole antifungal agents ketoconazole, itraconazole and fluconazole. In terms of biological role, sterol 14alpha-demethylase that plays a critical role in the cholesterol biosynthesis pathway, being cholesterol the major sterol component in mammalian membranes as well as a precursor for bile acid and steroid hormone synthesis. Cytochrome P450 monooxygenase that catalyzes the three-step oxidative removal of the 14alpha-methyl group (C-32) of sterols such as lanosterol (lanosta-8,24-dien-3beta-ol) and 24,25-dihydrolanosterol (DHL) in the form of formate, and converts the sterols to 4,4-dimethyl-5alpha-cholesta-8,14,24-trien-3beta-ol and 4,4-dimethyl-8,14-cholestadien-3beta-ol, respectively, which are intermediates of cholesterol biosynthesis. Can also demethylate substrates not intrinsic to mammals, such as eburicol (24-methylene-24,25-dihydrolanosterol), but at a lower rate than DHL. The polypeptide is Lanosterol 14-alpha demethylase (Bos taurus (Bovine)).